A 206-amino-acid polypeptide reads, in one-letter code: Ribosomal RNA small subunit methyltransferase G (206 aa).

Residues glycine 74, leucine 79, 125-126, and arginine 140 contribute to the S-adenosyl-L-methionine site; that span reads VE.

It belongs to the methyltransferase superfamily. RNA methyltransferase RsmG family.

The protein localises to the cytoplasm. It catalyses the reaction guanosine(527) in 16S rRNA + S-adenosyl-L-methionine = N(7)-methylguanosine(527) in 16S rRNA + S-adenosyl-L-homocysteine. In terms of biological role, specifically methylates the N7 position of guanine in position 527 of 16S rRNA. This chain is Ribosomal RNA small subunit methyltransferase G, found in Shewanella oneidensis (strain ATCC 700550 / JCM 31522 / CIP 106686 / LMG 19005 / NCIMB 14063 / MR-1).